Reading from the N-terminus, the 99-residue chain is Small ribosomal subunit protein eS24 (99 aa).

It belongs to the eukaryotic ribosomal protein eS24 family.

The protein is Small ribosomal subunit protein eS24 (rps2e) of Thermoplasma volcanium (strain ATCC 51530 / DSM 4299 / JCM 9571 / NBRC 15438 / GSS1).